Consider the following 358-residue polypeptide: Peptide chain release factor 1 (358 aa).

An N5-methylglutamine modification is found at Gln233.

This sequence belongs to the prokaryotic/mitochondrial release factor family. Methylated by PrmC. Methylation increases the termination efficiency of RF1.

The protein localises to the cytoplasm. Functionally, peptide chain release factor 1 directs the termination of translation in response to the peptide chain termination codons UAG and UAA. The polypeptide is Peptide chain release factor 1 (Staphylococcus epidermidis (strain ATCC 35984 / DSM 28319 / BCRC 17069 / CCUG 31568 / BM 3577 / RP62A)).